A 429-amino-acid chain; its full sequence is Z-DNA-binding protein 1 (429 aa).

Z-binding domains follow at residues 8 to 70 (PGRE…CLGG) and 103 to 166 (PQFS…TIYR). The disordered stretch occupies residues 68 to 107 (LGGTDPEGEGPAELALSSPAERPQQHAATIPETPGPQFSQ). 2 short sequence motifs (RIP homotypic interaction motif (RHIM)) span residues 195–219 (NSWISIANSEAIQIGHGNIITRQTV) and 253–277 (DIHMEQSILRRVQLGHSNEMRLHGV). Disordered stretches follow at residues 277–299 (VPSEGPAHIPPGSPPVSATAAGP) and 339–429 (KMSI…GGGI). Over residues 347–358 (AGPGGVAGSGEG) the composition is skewed to gly residues. A compositionally biased stretch (basic and acidic residues) spans 407 to 420 (KAAEGSHYVDEASH).

Homodimer. Interacts (via RIP homotypic interaction motif) with RIPK3; leading to RIPK3 activation and necroptosis; interaction is enhanced by CASP6. Interacts (via RIP homotypic interaction motif) with RIPK1. Component of the AIM2 PANoptosome complex, a multiprotein complex that drives inflammatory cell death (PANoptosis). As to quaternary structure, (Microbial infection) Interacts (via RIP homotypic interaction motif/RHIM) with herpes simplex virus 1/HHV-1 protein RIR1/ICP6 (via RHIM); this interaction may induce heteromeric amyloid assemblies and prevent necroptosis activation. Interacts with human herpes simplex virus 1/HHV-1 protein ICP0. Phosphorylated. Highly expressed in lymphatic tissues including lymph node, leukocytes, tonsil, bone marrow and spleen. Expressed to a lesser extent in thymus, lung and liver.

The protein localises to the cytoplasm. It localises to the nucleus. With respect to regulation, ZBP1-dependent necroptosis is normally inhibited by RIPK1: RIPK1 inhibits the ZBP1-induced activation of RIPK3 via FADD-mediated recruitment of CASP8, which cleaves RIPK1 and limits TNF-induced necroptosis. In terms of biological role, key innate sensor that recognizes and binds Z-RNA structures, which are produced by a number of viruses, such as herpesvirus, orthomyxovirus or flavivirus, and triggers different forms of cell death. ZBP1 acts as an essential mediator of pyroptosis, necroptosis and apoptosis (PANoptosis), an integral part of host defense against pathogens, by activating RIPK3, caspase-8 (CASP8), and the NLRP3 inflammasome. Key activator of necroptosis, a programmed cell death process in response to death-inducing TNF-alpha family members, via its ability to bind Z-RNA: once activated upon Z-RNA-binding, ZBP1 interacts and stimulates RIPK3 kinase, which phosphorylates and activates MLKL, triggering execution of programmed necrosis. In addition to TNF-induced necroptosis, necroptosis can also take place in the nucleus in response to orthomyxoviruses infection: ZBP1 recognizes and binds Z-RNA structures that are produced in infected nuclei by orthomyxoviruses, such as the influenza A virus (IAV), leading to ZBP1 activation, RIPK3 stimulation and subsequent MLKL phosphorylation, triggering disruption of the nuclear envelope and leakage of cellular DNA into the cytosol. ZBP1-dependent cell death in response to IAV infection promotes interleukin-1 alpha (IL1A) induction in an NLRP3-inflammasome-independent manner: IL1A expression is required for the optimal interleukin-1 beta (IL1B) production, and together, these cytokines promote infiltration of inflammatory neutrophils to the lung, leading to the formation of neutrophil extracellular traps. In addition to its direct role in driving necroptosis via its ability to sense Z-RNAs, also involved in PANoptosis triggered in response to bacterial infection: component of the AIM2 PANoptosome complex, a multiprotein complex that triggers PANoptosis. Also acts as the apical sensor of fungal infection responsible for activating PANoptosis. Involved in CASP8-mediated cell death via its interaction with RIPK1 but independently of its ability to sense Z-RNAs. In some cell types, also able to restrict viral replication by promoting cell death-independent responses. In response to Zika virus infection in neurons, promotes a cell death-independent pathway that restricts viral replication: together with RIPK3, promotes a death-independent transcriptional program that modifies the cellular metabolism via up-regulation expression of the enzyme ACOD1/IRG1 and production of the metabolite itaconate. Itaconate inhibits the activity of succinate dehydrogenase, generating a metabolic state in neurons that suppresses replication of viral genomes. Functionally, (Microbial infection) In case of herpes simplex virus 1/HHV-1 infection, forms hetero-amyloid structures with HHV-1 protein RIR1/ICP6 which may inhibit ZBP1-mediated necroptosis, thereby preventing host cell death pathway and allowing viral evasion. The polypeptide is Z-DNA-binding protein 1 (Homo sapiens (Human)).